We begin with the raw amino-acid sequence, 69 residues long: DNA-directed RNA polymerase subunit epsilon (69 aa).

This sequence belongs to the RNA polymerase subunit epsilon family. As to quaternary structure, RNAP is composed of a core of 2 alpha, a beta and a beta' subunit. The core is associated with a delta subunit, and at least one of epsilon or omega. When a sigma factor is associated with the core the holoenzyme is formed, which can initiate transcription.

It catalyses the reaction RNA(n) + a ribonucleoside 5'-triphosphate = RNA(n+1) + diphosphate. Its function is as follows. A non-essential component of RNA polymerase (RNAP). The chain is DNA-directed RNA polymerase subunit epsilon from Shouchella clausii (strain KSM-K16) (Alkalihalobacillus clausii).